A 358-amino-acid chain; its full sequence is Ion-translocating oxidoreductase complex subunit D (358 aa).

4 helical membrane-spanning segments follow: residues 19 to 39 (IMLW…YYFG), 41 to 61 (GVLL…FIAI), 79 to 99 (LTAL…VIII), and 125 to 145 (IGYV…MPPI). Thr-186 bears the FMN phosphoryl threonine mark. A run of 5 helical transmembrane segments spans residues 220–240 (FAQG…FLIL), 248–268 (IPVA…FTGF), 271–291 (LSAI…FIAT), 297–317 (SITP…VYLI), and 321–341 (GNYP…VPLI).

This sequence belongs to the NqrB/RnfD family. In terms of assembly, the complex is composed of six subunits: RnfA, RnfB, RnfC, RnfD, RnfE and RnfG. FMN serves as cofactor.

Its subcellular location is the cell inner membrane. Its function is as follows. Part of a membrane-bound complex that couples electron transfer with translocation of ions across the membrane. The polypeptide is Ion-translocating oxidoreductase complex subunit D (Haemophilus influenzae (strain PittEE)).